A 96-amino-acid polypeptide reads, in one-letter code: Protein Vpr (96 aa).

The segment at 1–42 (MEQAPEDQGPQREPYNEWTLELLEELKNEAVRHFPRIWLHSL) is homooligomerization. Phosphoserine; by host is present on residues serine 79, serine 94, and serine 96.

It belongs to the HIV-1 VPR protein family. Homooligomer, may form homodimer. Interacts with p6-gag region of the Pr55 Gag precursor protein through a (Leu-X-X)4 motif near the C-terminus of the P6gag protein. Interacts with host UNG. May interact with host RAD23A/HHR23A. Interacts with host VPRBP/DCAF1, leading to hijack the CUL4A-RBX1-DDB1-DCAF1/VPRBP complex, mediating ubiquitination of host proteins such as TERT and ZGPAT and arrest of the cell cycle in G2 phase. Post-translationally, phosphorylated on several residues by host. These phosphorylations regulate VPR activity for the nuclear import of the HIV-1 pre-integration complex.

It localises to the virion. The protein localises to the host nucleus. The protein resides in the host extracellular space. In terms of biological role, during virus replication, may deplete host UNG protein, and incude G2-M cell cycle arrest. Acts by targeting specific host proteins for degradation by the 26S proteasome, through association with the cellular CUL4A-DDB1 E3 ligase complex by direct interaction with host VPRPB/DCAF-1. Cell cycle arrest reportedly occurs within hours of infection and is not blocked by antiviral agents, suggesting that it is initiated by the VPR carried into the virion. Additionally, VPR induces apoptosis in a cell cycle dependent manner suggesting that these two effects are mechanistically linked. Detected in the serum and cerebrospinal fluid of AIDS patient, VPR may also induce cell death to bystander cells. During virus entry, plays a role in the transport of the viral pre-integration (PIC) complex to the host nucleus. This function is crucial for viral infection of non-dividing macrophages. May act directly at the nuclear pore complex, by binding nucleoporins phenylalanine-glycine (FG)-repeat regions. In Homo sapiens (Human), this protein is Protein Vpr.